Consider the following 324-residue polypeptide: Alkanal monooxygenase beta chain (324 aa).

The protein belongs to the bacterial luciferase oxidoreductase family. As to quaternary structure, heterodimer of an alpha and a beta chain.

The enzyme catalyses a long-chain fatty aldehyde + FMNH2 + O2 = a long-chain fatty acid + hnu + FMN + H2O + 2 H(+). In terms of biological role, light-emitting reaction in luminous bacteria. The specific role of the beta subunit is unknown, but it is absolutely required for bioluminescence activity. The chain is Alkanal monooxygenase beta chain (luxB) from Photorhabdus luminescens (Xenorhabdus luminescens).